The primary structure comprises 217 residues: Protein GrpE (217 aa).

The protein belongs to the GrpE family. In terms of assembly, homodimer.

It is found in the cytoplasm. In terms of biological role, participates actively in the response to hyperosmotic and heat shock by preventing the aggregation of stress-denatured proteins, in association with DnaK and GrpE. It is the nucleotide exchange factor for DnaK and may function as a thermosensor. Unfolded proteins bind initially to DnaJ; upon interaction with the DnaJ-bound protein, DnaK hydrolyzes its bound ATP, resulting in the formation of a stable complex. GrpE releases ADP from DnaK; ATP binding to DnaK triggers the release of the substrate protein, thus completing the reaction cycle. Several rounds of ATP-dependent interactions between DnaJ, DnaK and GrpE are required for fully efficient folding. This is Protein GrpE from Mycoplasma genitalium (strain ATCC 33530 / DSM 19775 / NCTC 10195 / G37) (Mycoplasmoides genitalium).